The primary structure comprises 636 residues: MDATTTHSRLSEHDIYLFREGSHGRLYDKLGCQLDEAGAHFAVWAPNARAVAVIGSFNAWRDDAAVLRPRDDGSGIWEGFVAGVAAGDVYKYSIVCQDGRVAEKADPFAQYAEVPPATGSRAWRSAHRWADDAWMAGRARANALDAPFSIYELHLGSWRRAQDGALPGYREIAPQLAAYVVEWGFTHVELMPLSEHPFYGSWGYQTTGYFAATARYGTPDDLMFLIDTLHQAGVGVILDWVPSHFPSDAHGLAEFDGTYLYEHADPRQGFHPEWHSCIFNYGRHEVCAFLLSSALFWLERFHIDGLRVDAVASMLYLDYGRQHGEWVPNRYGGRENLDAVAFLRRLNEAVYRDHPGVQTIAEESTAWPMVSRPLYVGGLGFGMKWNMGWMHDSLDYFRHDPLFRKFHHGRITFSIWYAFHENFVLPLSHDEVVYGKGSLIGKMPGDSWQQFAGLRALFGYMWAHPGKKLLFMGGEFGQRREWTHEGELEWWVLDRPEHAGLRHWVGDLNRLYRERAALHELDFDEAGFQWIDSDDSENSVLSFLRKSRNGATVLVICNFTPVTRPNYTLGVPRAGFWREALNSDATLYGGSGAGNLGGVETVPVPAHGHYQSLTLTLPPLAVLFLIPEVDDARPDS.

Residue D309 is the Nucleophile of the active site. The Proton donor role is filled by E362.

This sequence belongs to the glycosyl hydrolase 13 family. GlgB subfamily. In terms of assembly, monomer.

It carries out the reaction Transfers a segment of a (1-&gt;4)-alpha-D-glucan chain to a primary hydroxy group in a similar glucan chain.. It functions in the pathway glycan biosynthesis; glycogen biosynthesis. Catalyzes the formation of the alpha-1,6-glucosidic linkages in glycogen by scission of a 1,4-alpha-linked oligosaccharide from growing alpha-1,4-glucan chains and the subsequent attachment of the oligosaccharide to the alpha-1,6 position. In Aromatoleum aromaticum (strain DSM 19018 / LMG 30748 / EbN1) (Azoarcus sp. (strain EbN1)), this protein is 1,4-alpha-glucan branching enzyme GlgB.